The primary structure comprises 282 residues: 4-diphosphocytidyl-2-C-methyl-D-erythritol kinase (282 aa).

The active site involves Lys13. 96–106 (PMGGGIGGGSS) serves as a coordination point for ATP. Asp138 is a catalytic residue.

It belongs to the GHMP kinase family. IspE subfamily.

It catalyses the reaction 4-CDP-2-C-methyl-D-erythritol + ATP = 4-CDP-2-C-methyl-D-erythritol 2-phosphate + ADP + H(+). It functions in the pathway isoprenoid biosynthesis; isopentenyl diphosphate biosynthesis via DXP pathway; isopentenyl diphosphate from 1-deoxy-D-xylulose 5-phosphate: step 3/6. Functionally, catalyzes the phosphorylation of the position 2 hydroxy group of 4-diphosphocytidyl-2C-methyl-D-erythritol. The polypeptide is 4-diphosphocytidyl-2-C-methyl-D-erythritol kinase (Pseudomonas syringae pv. tomato (strain ATCC BAA-871 / DC3000)).